The chain runs to 246 residues: uncharacterized protein (246 aa).

S194 is subject to Phosphoserine.

This is an uncharacterized protein from Schizosaccharomyces pombe (strain 972 / ATCC 24843) (Fission yeast).